A 1373-amino-acid polypeptide reads, in one-letter code: Disease resistance protein RRS1 (1373 aa).

One can recognise a TIR domain in the interval Glu5–His146. An NB-ARC domain is found at Ile170 to His421. Gly179–Thr186 serves as a coordination point for ATP. 9 LRR repeats span residues Ser498–Asn522, Asn535–Pro553, Asn554–Pro575, His577–Leu598, Ala621–Arg646, Pro665–Pro688, Leu742–Gly766, Pro768–Ile793, and Pro831–Leu854. The short motif at Arg988–Asp1005 is the Nuclear localization signal element. A DNA-binding region (WRKY) is located at residues Ile1204 to Pro1272. Residues Arg1300–Ala1323 form a disordered region.

As to quaternary structure, interacts with PopP2, a R.solanacearum type III effector.

It is found in the nucleus. Transcription factor. Interacts specifically with the W box (5'-(T)TGAC[CT]-3'), a frequently occurring elicitor-responsive cis-acting element. Also acts as a disease resistance protein involved in resistance to fungal and bacterial pathogens, including R.solanacearum, P.syringae pv. tomato and C.higginsianum. In presence of RPS4, elicites an EDS1-dependent hypersensitive response. This Arabidopsis thaliana (Mouse-ear cress) protein is Disease resistance protein RRS1.